The chain runs to 327 residues: Serine/threonine-protein phosphatase PP1-beta catalytic subunit (327 aa).

Residue A2 is modified to N-acetylalanine. Mn(2+) is bound by residues D63, H65, D91, and N123. The active-site Proton donor is H124. Mn(2+) contacts are provided by H172 and H247. The segment at 305–327 (QYGGLNSGRPVTPPRTANPPKKR) is disordered. Residue T316 is modified to Phosphothreonine.

It belongs to the PPP phosphatase family. PP-1 subfamily. As to quaternary structure, PP1 comprises a catalytic subunit, PPP1CA, PPP1CB or PPP1CC, which is folded into its native form by inhibitor 2 and glycogen synthetase kinase 3, and then complexed to one or several targeting or regulatory subunits. The targeting or regulatory subunits determine the substrate specificity of PP1. PPP1R12A, PPP1R12B and PPP1R12C mediate binding to myosin. PPP1R3A (in skeletal muscle), PPP1R3B (in liver), PPP1R3C, PPP1R3D and PPP1R3F (in brain) mediate binding to glycogen. PPP1R15A and PPP1R15B mediate binding to EIF2S1. Part of a complex containing PPP1R15B, PP1 and NCK1/2. Interacts with PPP1R7 and PPP1R12C. Interacts with PPP1R16B. Component of the PTW/PP1 phosphatase complex, composed of PPP1R10/PNUTS, TOX4, WDR82, and PPP1CA or PPP1CB or PPP1CC. Interacts with PPP1R8. Interacts with PPP1R12A and NUAK1; the interaction is direct. Interacts with TRIM28; the interaction is weak. Interacts with FOXP3. Interacts with RRP1B. Interacts with SERPINE1. Interacts with LZTR1. Component of the SHOC2-MRAS-PP1c (SMP) complex consisting of SHOC2, GTP-bound M-Ras/MRAS and the catalytic subunit of protein phosphatase 1 (either PPP1CA, PPP1CB or PPP1CC). SHOC2 and PP1c preferably bind M-Ras/MRAS, but they also bind K-Ras/KRAS, N-Ras/NRAS and H-Ras/HRAS; these interactions are GTP-dependent and both SHOC2 and PP1c are required to form a stable complex. Interacts with SHOC2 in the absence of Ras GTPases. Requires Mn(2+) as cofactor.

It is found in the cytoplasm. Its subcellular location is the nucleus. The protein localises to the nucleoplasm. The protein resides in the nucleolus. It carries out the reaction O-phospho-L-seryl-[protein] + H2O = L-seryl-[protein] + phosphate. It catalyses the reaction O-phospho-L-threonyl-[protein] + H2O = L-threonyl-[protein] + phosphate. The catalysed reaction is O-phospho-L-seryl-[myosin light chain] + H2O = L-seryl-[myosin light chain] + phosphate. The enzyme catalyses O-phospho-L-threonyl-[myosin light chain] + H2O = L-threonyl-[myosin light chain] + phosphate. Inhibited by the toxins okadaic acid, tautomycin and microcystin Leu-Arg. The phosphatase activity of the PPP1R15A-PP1 complex toward EIF2S1 is specifically inhibited by Salubrinal, a drug that protects cells from endoplasmic reticulum stress. Functionally, protein phosphatase that associates with over 200 regulatory proteins to form highly specific holoenzymes which dephosphorylate hundreds of biological targets. Protein phosphatase (PP1) is essential for cell division, it participates in the regulation of glycogen metabolism, muscle contractility and protein synthesis. Involved in regulation of ionic conductances and long-term synaptic plasticity. Component of the PTW/PP1 phosphatase complex, which plays a role in the control of chromatin structure and cell cycle progression during the transition from mitosis into interphase. In balance with CSNK1D and CSNK1E, determines the circadian period length, through the regulation of the speed and rhythmicity of PER1 and PER2 phosphorylation. May dephosphorylate CSNK1D and CSNK1E. Core component of the SHOC2-MRAS-PP1c (SMP) holophosphatase complex that regulates the MAPK pathway activation. The SMP complex specifically dephosphorylates the inhibitory phosphorylation at 'Ser-259' of RAF1 kinase, 'Ser-365' of BRAF kinase and 'Ser-214' of ARAF kinase, stimulating their kinase activities. The SMP complex enhances the dephosphorylation activity and substrate specificity of PP1c. In Bos taurus (Bovine), this protein is Serine/threonine-protein phosphatase PP1-beta catalytic subunit (PPP1CB).